The following is a 334-amino-acid chain: Ferrochelatase 1 (334 aa).

Fe cation is bound by residues His-201 and Glu-282.

It belongs to the ferrochelatase family.

The protein resides in the cytoplasm. It carries out the reaction heme b + 2 H(+) = protoporphyrin IX + Fe(2+). Its pathway is porphyrin-containing compound metabolism; protoheme biosynthesis; protoheme from protoporphyrin-IX: step 1/1. In terms of biological role, catalyzes the ferrous insertion into protoporphyrin IX. This Shewanella oneidensis (strain ATCC 700550 / JCM 31522 / CIP 106686 / LMG 19005 / NCIMB 14063 / MR-1) protein is Ferrochelatase 1.